We begin with the raw amino-acid sequence, 193 residues long: Outer-membrane lipoprotein LolB (193 aa).

The N-terminal stretch at 1-21 is a signal peptide; it reads MRPARRFLAALACVAGALLSA. The N-palmitoyl cysteine moiety is linked to residue C22. The S-diacylglycerol cysteine moiety is linked to residue C22.

This sequence belongs to the LolB family. In terms of assembly, monomer.

It is found in the cell outer membrane. In terms of biological role, plays a critical role in the incorporation of lipoproteins in the outer membrane after they are released by the LolA protein. This Azoarcus sp. (strain BH72) protein is Outer-membrane lipoprotein LolB.